The sequence spans 621 residues: Chaperone protein HscA homolog (621 aa).

Belongs to the heat shock protein 70 family.

In terms of biological role, chaperone involved in the maturation of iron-sulfur cluster-containing proteins. Has a low intrinsic ATPase activity which is markedly stimulated by HscB. The sequence is that of Chaperone protein HscA homolog from Ralstonia pickettii (strain 12J).